The chain runs to 161 residues: Endoribonuclease YbeY (161 aa).

The Zn(2+) site is built by H121, H125, and H131.

The protein belongs to the endoribonuclease YbeY family. Requires Zn(2+) as cofactor.

It localises to the cytoplasm. Its function is as follows. Single strand-specific metallo-endoribonuclease involved in late-stage 70S ribosome quality control and in maturation of the 3' terminus of the 16S rRNA. The chain is Endoribonuclease YbeY from Stenotrophomonas maltophilia (strain R551-3).